The following is a 343-amino-acid chain: Replication initiation protein (343 aa).

The segment at 42–61 is disordered; sequence ERKRTKRRRGEHSTKPKCEN.

In terms of biological role, probably functions as an initiator for the IncI1 ColIb-P9 replicon. The polypeptide is Replication initiation protein (repZ) (Escherichia coli).